Here is a 1493-residue protein sequence, read N- to C-terminus: MAAAAGDRASSSGFPGAAAASPEAGGGGGALQGSGAPAAGAGLLRETGSAGRERADWRRQQLRKVRSVELDQLPEQPLFLTASPPCPSTSPSPEPADAAAGASGFQPAAGPPPPGAASRCGSHSAELAAARDSGARSPAGAEPPSAAAPSGREMENKETLKGLHKMDDRPEERMIREKLKATCMPAWKHEWLERRNRRGPVVVKPIPIKGDGSEMSNLAAELQGEGQAGSAAPAPKGRRSPSPGSSPSGRSGKPESPGVRRKRVSPVPFQSGRITPPRRAPSPDGFSPYSPEETSRRVNKVMRARLYLLQQIGPNSFLIGGDSPDNKYRVFIGPQNCSCGRGTFCIHLLFVMLRVFQLEPSDPMLWRKTLKNFEVESLFQKYHSRRSSRIKAPSRNTIQKFVSRMSNCHTLSSSSTSTSSSENSIKDEEEQMCPICLLGMLDEESLTVCEDGCRNKLHHHCMSIWAEECRRNREPLICPLCRSKWRSHDFYSHELSSPVDSPTSLRGVQQPSSPQQPVAGSQRRNQESNFNLTHYGTQQIPPAYKDLAEPWIQAFGMELVGCLFSRNWNVREMALRRLSHDVSGALLLANGESTGTSGGGSGGSLSAGAASGSSQPSISGDVVEAFCSVLSIVCADPVYKVYVAALKTLRAMLVYTPCHSLAERIKLQRLLRPVVDTILVKCADANSRTSQLSISTLLELCKGQAGELAVGREILKAGSIGVGGVDYVLSCILGNQAESNNWQELLGRLCLIDRLLLEISAEFYPHIVSTDVSQAEPVEIRYKKLLSLLAFALQSIDNSHSMVGKLSRRIYLSSARMVTTVPPLFSKLVTMLSASGSSHFARMRRRLMAIADEVEIAEVIQLGSEDTLDGQQDSSQALAPPRYPESSSLEHTAHVEKTGKGLKATRLSASSEDISDRLAGVSVGLPSSATTEQPKPTVQTKGRPHSQCLNSSPLSPPQLMFPAISAPCSSAPSVPAGSVTDASKHRPRAFVPCKIPSASPQTQRKFSLQFQRTCSENRDSEKLSPVFTQSRPPPSSNIHRAKASRPVPGSTSKLGDASKNSMTLDLNSASQCDDSFGSGSNSGSAVIPSEETAFTPAEDKCRLDVNPELNSSIEDLLEASMPSSDTTVTFKSEVAVLSPEKAESDDTYKDDVNHNQKCKEKMEAEEEEALAIAMAMSASQDALPIVPQLQVENGEDIIIIQQDTPETLPGHTKANEPYREDTEWLKGQQIGLGAFSSCYQAQDVGTGTLMAVKQVTYVRNTSSEQEEVVEALREEIRMMSHLNHPNIIRMLGATCEKSNYNLFIEWMAGASVAHLLSKYGAFKESVVINYTEQLLRGLSYLHENQIIHRDVKGANLLIDSTGQRLRIADFGAAARLASKGTGAGEFQGQLLGTIAFMAPEVLRGQQYGRSCDVWSVGCAIIEMACAKPPWNAEKHSNHLALIFKIASATTAPSIPSHLSPGLRDVALRCLELQPQDRPPSRELLKHPVFRTTW.

2 stretches are compositionally biased toward low complexity: residues 1–23 (MAAA…ASPE) and 33–42 (GSGAPAAGAG). Disordered stretches follow at residues 1 to 171 (MAAA…DRPE) and 222 to 295 (LQGE…EETS). At A2 the chain carries N-acetylalanine. Residue S21 is modified to Phosphoserine. Positions 84-94 (PPCPSTSPSPE) are enriched in pro residues. 2 stretches are compositionally biased toward low complexity: residues 95-108 (PADA…FQPA) and 135-151 (ARSP…APSG). S137 bears the Phosphoserine mark. A compositionally biased stretch (basic and acidic residues) spans 152 to 171 (REMENKETLKGLHKMDDRPE). Over residues 230 to 257 (SAAPAPKGRRSPSPGSSPSGRSGKPESP) the composition is skewed to low complexity. S265 is subject to Phosphoserine. Position 275 is a phosphothreonine (T275). 3 positions are modified to phosphoserine: S282, S287, and S290. Residues 328–356 (YRVFIGPQNCSCGRGTFCIHLLFVMLRVF) form an SWIM-type zinc finger. Residues 433-482 (CPICLLGMLDEESLTVCEDGCRNKLHHHCMSIWAEECRRNREPLICPLCR) form an RING-type zinc finger. Residues 496 to 506 (SSPVDSPTSLR) are compositionally biased toward polar residues. 4 disordered regions span residues 496-524 (SSPV…SQRR), 866-910 (DTLD…LSAS), 923-955 (VGLP…SPLS), and 992-1060 (PCKI…ASKN). Residues S497, S521, and S910 each carry the phosphoserine modification. Residues 507-522 (GVQQPSSPQQPVAGSQ) show a composition bias toward low complexity. Composition is skewed to polar residues over residues 925–940 (LPSS…TVQT) and 998–1014 (ASPQ…QRTC). S999 and S1024 each carry phosphoserine. A compositionally biased stretch (polar residues) spans 1049 to 1060 (GSTSKLGDASKN). Residues 1224-1489 (WLKGQQIGLG…SRELLKHPVF (266 aa)) enclose the Protein kinase domain. Residues 1230–1238 (IGLGAFSSC) and K1253 each bind ATP. D1350 (proton acceptor) is an active-site residue. T1381 and T1393 each carry phosphothreonine; by autocatalysis.

Belongs to the protein kinase superfamily. STE Ser/Thr protein kinase family. MAP kinase kinase kinase subfamily. In terms of assembly, binds both upstream activators and downstream substrates in multimolecular complexes through its N-terminus. Oligomerizes after binding MAP4K2 or TRAF2. Interacts (via the kinase catalytic domain) with STK38. Interacts with GRIPAP1. Mg(2+) serves as cofactor. Autophosphorylated. In terms of tissue distribution, most highly expressed in spleen, kidney and lung.

It is found in the membrane. The enzyme catalyses L-seryl-[protein] + ATP = O-phospho-L-seryl-[protein] + ADP + H(+). It catalyses the reaction L-threonyl-[protein] + ATP = O-phospho-L-threonyl-[protein] + ADP + H(+). Its activity is regulated as follows. Activated by autophosphorylation on Thr-1381 and Thr-1393 following oligomerization. Functionally, component of a protein kinase signal transduction cascade. Activates the ERK and JNK kinase pathways by phosphorylation of MAP2K1 and MAP2K4. May phosphorylate the MAPK8/JNK1 kinase. Activates CHUK and IKBKB, the central protein kinases of the NF-kappa-B pathway. The chain is Mitogen-activated protein kinase kinase kinase 1 (Map3k1) from Rattus norvegicus (Rat).